We begin with the raw amino-acid sequence, 241 residues long: Small ribosomal subunit protein bS6 (241 aa).

Basic residues predominate over residues 97–108 (KPKIRERNRKYT). Disordered stretches follow at residues 97–187 (KPKI…HREN) and 199–241 (NKNH…QSSN). Positions 109 to 118 (PRRDRFDKPN) are enriched in basic and acidic residues. 3 stretches are compositionally biased toward low complexity: residues 130 to 151 (QDQQ…QTSQ), 161 to 180 (DDFQ…QQNQ), and 199 to 210 (NKNHQNQTSQTQ).

Belongs to the bacterial ribosomal protein bS6 family.

In terms of biological role, binds together with bS18 to 16S ribosomal RNA. The chain is Small ribosomal subunit protein bS6 from Mesomycoplasma hyopneumoniae (strain 7448) (Mycoplasma hyopneumoniae).